The following is a 386-amino-acid chain: DNA (cytosine-5)-methyltransferase 3-like (386 aa).

The region spanning Glu41–Glu173 is the ADD domain. The GATA-type; atypical zinc-finger motif lies at Ile52 to Asp82. The PHD-type; atypical zinc finger occupies Gln93–Ser149.

As to quaternary structure, homodimer. Heterotetramer composed of 1 DNMT3A homodimer and 2 DNMT3L subunits (DNMT3L-DNMT3A-DNMT3A-DNMT3L). Interacts with histone H3 (via N-terminus); interaction is strongly inhibited by methylation at lysine 4 (H3K4me). Interacts with EZH2; the interaction is direct. Interacts with SPOCD1. In terms of tissue distribution, expressed at low levels in several tissues including testis, ovary, and thymus.

It is found in the nucleus. Catalytically inactive regulatory factor of DNA methyltransferases that can either promote or inhibit DNA methylation depending on the context. Essential for the function of DNMT3A and DNMT3B: activates DNMT3A and DNMT3B by binding to their catalytic domain. Acts by accelerating the binding of DNA and S-adenosyl-L-methionine (AdoMet) to the methyltransferases and dissociates from the complex after DNA binding to the methyltransferases. Recognizes unmethylated histone H3 lysine 4 (H3K4me0) and induces de novo DNA methylation by recruitment or activation of DNMT3. Plays a key role in embryonic stem cells and germ cells. In germ cells, required for the methylation of imprinted loci together with DNMT3A. In male germ cells, specifically required to methylate retrotransposons, preventing their mobilization. Plays a key role in embryonic stem cells (ESCs) by acting both as an positive and negative regulator of DNA methylation. While it promotes DNA methylation of housekeeping genes together with DNMT3A and DNMT3B, it also acts as an inhibitor of DNA methylation at the promoter of bivalent genes. Interacts with the EZH2 component of the PRC2/EED-EZH2 complex, preventing interaction of DNMT3A and DNMT3B with the PRC2/EED-EZH2 complex, leading to maintain low methylation levels at the promoters of bivalent genes. Promotes differentiation of ESCs into primordial germ cells by inhibiting DNA methylation at the promoter of RHOX5, thereby activating its expression. The polypeptide is DNA (cytosine-5)-methyltransferase 3-like (DNMT3L) (Homo sapiens (Human)).